We begin with the raw amino-acid sequence, 151 residues long: Large ribosomal subunit protein bL9 (151 aa).

This sequence belongs to the bacterial ribosomal protein bL9 family.

In terms of biological role, binds to the 23S rRNA. The polypeptide is Large ribosomal subunit protein bL9 (Lactobacillus delbrueckii subsp. bulgaricus (strain ATCC BAA-365 / Lb-18)).